A 548-amino-acid chain; its full sequence is Chaperonin GroEL (548 aa).

ATP-binding positions include 30–33, Lys-51, 87–91, Gly-415, 479–481, and Asp-495; these read TLGP, DGTTT, and NAA.

This sequence belongs to the chaperonin (HSP60) family. Forms a cylinder of 14 subunits composed of two heptameric rings stacked back-to-back. Interacts with the co-chaperonin GroES.

It localises to the cytoplasm. It catalyses the reaction ATP + H2O + a folded polypeptide = ADP + phosphate + an unfolded polypeptide.. Its function is as follows. Together with its co-chaperonin GroES, plays an essential role in assisting protein folding. The GroEL-GroES system forms a nano-cage that allows encapsulation of the non-native substrate proteins and provides a physical environment optimized to promote and accelerate protein folding. This chain is Chaperonin GroEL, found in Pectobacterium carotovorum subsp. carotovorum (strain PC1).